The primary structure comprises 125 residues: Small ribosomal subunit protein bS6 (125 aa).

The tract at residues S100–E125 is disordered. A compositionally biased stretch (basic and acidic residues) spans K104 to T113. The span at E116 to E125 shows a compositional bias: acidic residues.

It belongs to the bacterial ribosomal protein bS6 family.

Functionally, binds together with bS18 to 16S ribosomal RNA. The polypeptide is Small ribosomal subunit protein bS6 (Histophilus somni (strain 129Pt) (Haemophilus somnus)).